The chain runs to 313 residues: MTQEFAHLSVLLTETVAGLNIKPEGIYIDGTFGRGGHSREVLKQLGPNGRLIAIDRDPQAIAAAEQFADDARFSIVHGGFGQLAQYVDDLGLRGKIDGILFDFGVSSPQLDDAERGFSFLRDGPLDMRMDNSQGETAAEWLARAEIEDMAWVFKTYGEEKNARHIARCIAADRDKTPFLRTKELADLIARVSKSKERNKHPATRVFQAIRIYINSELEQIDQALEGAVTVLAPQGRLSVISFHSLEDRMVKRFIRRHSQGESVPHGLPLTEAEINKTRLLKAVGKAIKPSAEEIDRNARARSSVLRVAERLDY.

S-adenosyl-L-methionine contacts are provided by residues 35-37, Asp55, Phe80, Asp102, and Gln109; that span reads GGH.

It belongs to the methyltransferase superfamily. RsmH family.

It localises to the cytoplasm. The catalysed reaction is cytidine(1402) in 16S rRNA + S-adenosyl-L-methionine = N(4)-methylcytidine(1402) in 16S rRNA + S-adenosyl-L-homocysteine + H(+). Functionally, specifically methylates the N4 position of cytidine in position 1402 (C1402) of 16S rRNA. The sequence is that of Ribosomal RNA small subunit methyltransferase H from Shewanella loihica (strain ATCC BAA-1088 / PV-4).